Consider the following 1078-residue polypeptide: Extracellular calcium-sensing receptor (1078 aa).

Positions 1 to 19 (MAFYSCCWVLLALTWHTSA) are cleaved as a signal peptide. Over 20 to 610 (YGPDQRAQKK…KEIEFLSWTE (591 aa)) the chain is Extracellular. Residues 22-188 (PDQRAQKKGD…QFKSFLRTIP (167 aa)) form a ligand-binding 1 (LB1) region. The cysteines at positions 60 and 101 are disulfide-linked. 66–70 (RGFRW) provides a ligand contact to phosphate. Residues I81, S84, L87, and L88 each contribute to the Ca(2+) site. A glycan (N-linked (GlcNAc...) asparagine) is linked at N90. Residue T100 coordinates Ca(2+). The N-linked (GlcNAc...) asparagine glycan is linked to N130. Ca(2+) is bound at residue T145. The L-tryptophan site is built by S147, A168, and S170. Positions 170, 188, 190, 231, and 234 each coordinate Ca(2+). The tract at residues 189–324 (NDEHQATAMA…GGTIGFALKA (136 aa)) is ligand-binding 2 (LB2). Disulfide bonds link C236-C561, C358-C395, C437-C449, C542-C562, C546-C565, C568-C582, and C585-C598. Spermine-binding residues include D238 and S240. N-linked (GlcNAc...) asparagine glycosylation is found at N261 and N287. E297 contributes to the Ca(2+) binding site. E297 lines the L-tryptophan pocket. 2 N-linked (GlcNAc...) asparagine glycosylation sites follow: N386 and N400. 415–417 (RIS) serves as a coordination point for phosphate. N-linked (GlcNAc...) asparagine glycans are attached at residues N446, N468, and N488. Residue Y489 participates in Ca(2+) binding. N541 carries an N-linked (GlcNAc...) asparagine glycan. Residues 542–612 (CSRDCLAGTR…IEFLSWTEPF (71 aa)) are cysteine-rich (CR). Ca(2+) is bound at residue G557. N594 carries N-linked (GlcNAc...) asparagine glycosylation. A helical membrane pass occupies residues 611-636 (PFGIALTLFAVLGIFLTAFVLGVFIK). At 637 to 648 (FRNTPIVKATNR) the chain is on the cytoplasmic side. The intracellular loop 1 (ICL1) stretch occupies residues 637–648 (FRNTPIVKATNR). Residues 649–668 (ELSYLLLFSLLCCFSSSLFF) traverse the membrane as a helical segment. The Extracellular portion of the chain corresponds to 669–674 (IGEPQD). Residues 675–698 (WTCRLRQPAFGISFVLCISCILVK) traverse the membrane as a helical segment. The Cytoplasmic segment spans residues 699–722 (TNRVLLVFEAKIPTSFHRKWWGLN). An intracellular loop 2 (ICL2) region spans residues 699–722 (TNRVLLVFEAKIPTSFHRKWWGLN). Residues 723–745 (LQFLLVFLCTFMQIVICVIWLYT) traverse the membrane as a helical segment. The Extracellular portion of the chain corresponds to 746-769 (APPSSYRNQELEDEIIFITCHEGS). Residues 770–789 (LMALGFLIGYTCLLAAICFF) form a helical membrane-spanning segment. The Cytoplasmic segment spans residues 790–805 (FAFKSRKLPENFNEAK). Residues 790 to 805 (FAFKSRKLPENFNEAK) form an intracellular loop 3 (ICL3) region. Residues 806–828 (FITFSMLIFFIVWISFIPAYAST) traverse the membrane as a helical segment. Topologically, residues 829–832 (YGKF) are extracellular. The helical transmembrane segment at 833–854 (VSAVEVIAILAASFGLLACIFF) threads the bilayer. The Cytoplasmic segment spans residues 855 to 1078 (NKIYIILFKP…STVTENVVNS (224 aa)). The tract at residues 855-1078 (NKIYIILFKP…STVTENVVNS (224 aa)) is C-terminus. Residues 880–900 (AFKVAARATLRRSNVSRKRSS) form an interaction with RNF19A region. T888 carries the phosphothreonine; by PKC modification. Positions 890-898 (RRSNVSRKR) are arginine-rich retention motif. Phosphoserine; by PKC is present on S892. 3 disordered regions span residues 892-963 (SNVS…PRCK), 986-1006 (AMAH…SSDT), and 1030-1055 (TGLQ…PALV). S899 is modified (phosphoserine; by PKA). A compositionally biased stretch (low complexity) spans 900 to 918 (SSLGGSTGSTPSSSISSKS). S920 carries the post-translational modification Phosphoserine. The span at 932–960 (QQQPLALTQQEQQQQPLTLPQQQRSQQQP) shows a compositional bias: low complexity. Over residues 993–1006 (THQNSLEAQKSSDT) the composition is skewed to polar residues. S1061 carries the post-translational modification Phosphoserine.

The protein belongs to the G-protein coupled receptor 3 family. In terms of assembly, homodimer; disulfide-linked. Interacts with VCP. Interacts with ARRB1. In terms of processing, phosphorylation at Thr-888 by PKC impairs coupling with G(q)/G(11) G-proteins, while it does not affect G(i)/G(o)-coupling. Phosphorylation at Ser-892 by PKC and Ser-899 by PKA promote plasma membrane localization. Ubiquitinated by RNF19A; which induces proteasomal degradation. Post-translationally, N-glycosylated. In terms of tissue distribution, expressed in the temporal lobe, frontal lobe, parietal lobe, hippocampus, and cerebellum. Also found in kidney, lung, liver, heart, skeletal muscle, placenta.

Its subcellular location is the cell membrane. Its activity is regulated as follows. In resting state, adopts an open conformation, anion-binding promoting the inactive configuration. Upon aromatic amino acid-binding, the groove in the extracellular venus flytrap module is closed, thereby inducing the formation of a novel homodimer interface between subunits. Calcium ions stabilize the active state by enhancing homodimer interactions between membrane-proximal domains to fully activate the receptor. Upon activation, the homodimer adopts an asymmetric configuration of the 7-transmembrane region that primes one protomer for G-protein coupling. G-protein binding expands the transmembrane dimer interface; the restriction imposed by the receptor dimer, in combination with intracellular loop 2 (ICL2), enables G-protein activation by facilitating conformational transition of G-protein alpha. Coupling to different classes of G-proteins results in distinct CASR-G-protein interfaces. Activated by glucose, which acts as a positive allosteric modulator. Activated by positive allosteric modulator drugs cinacalcet, evocalcet and etelcalcetide, which are clinically used for the treatment of hyperparathyroidism and familial hypocalciuric hypercalcemia. Inhibited by NPS-2143, a negative allosteric modulator tested for the treatment of hypocalcemia. Activated by velcalcetide (AMG 416), a D-amino acid-containing peptide agonist that is being evaluated for the treatment of secondary hyperparathyroidism in chronic kidney disease patients receiving hemodialysis. Velcalcetide agonist acts by forming a disulfide bond with Cys-482. Its function is as follows. G-protein-coupled receptor that senses changes in the extracellular concentration of calcium ions and plays a key role in maintaining calcium homeostasis. Senses fluctuations in the circulating calcium concentration: activated by elevated circulating calcium, leading to decreased parathyroid hormone (PTH) secretion in parathyroid glands. In kidneys, acts as a key regulator of renal tubular calcium resorption. Ligand binding causes a conformation change that triggers signaling via guanine nucleotide-binding proteins (G-proteins) and modulates the activity of downstream effectors. CASR is coupled with different G(q)/G(11), G(i)/G(o)- or G(s)-classes of G-proteins depending on the context. In the parathyroid and kidney, CASR signals through G(q)/G(11) and G(i)/G(o) G-proteins: G(q)/G(11) coupling activates phospholipase C-beta, releasing diacylglycerol (DAG) and inositol 1,4,5-trisphosphate (IP3) second messengers, while G(i)/G(o) coupling mediates inhibition of adenylate cyclase activity. The G-protein-coupled receptor activity is activated by a co-agonist mechanism: aromatic amino acids, such as Trp or Phe, act concertedly with divalent cations, such as calcium or magnesium, to achieve full receptor activation. Acts as an activator of the NLRP3 inflammasome via G(i)/G(o)-mediated signaling: down-regulation of cyclic AMP (cAMP) relieving NLRP3 inhibition by cAMP. Acts as a regulator of proton-sensing receptor GPR68 in a seesaw manner: CASR-mediated signaling inhibits GPR68 signaling in response to extracellular calcium, while GPR68 inhibits CASR in presence of extracellular protons. The protein is Extracellular calcium-sensing receptor of Homo sapiens (Human).